Reading from the N-terminus, the 101-residue chain is NAD(P)H-quinone oxidoreductase subunit 4L, chloroplastic (101 aa).

A run of 2 helical transmembrane segments spans residues 2–22 (MFEH…YGLI) and 61–81 (IFSI…LAIV).

The protein belongs to the complex I subunit 4L family. In terms of assembly, NDH is composed of at least 16 different subunits, 5 of which are encoded in the nucleus.

The protein localises to the plastid. It is found in the chloroplast thylakoid membrane. The enzyme catalyses a plastoquinone + NADH + (n+1) H(+)(in) = a plastoquinol + NAD(+) + n H(+)(out). The catalysed reaction is a plastoquinone + NADPH + (n+1) H(+)(in) = a plastoquinol + NADP(+) + n H(+)(out). NDH shuttles electrons from NAD(P)H:plastoquinone, via FMN and iron-sulfur (Fe-S) centers, to quinones in the photosynthetic chain and possibly in a chloroplast respiratory chain. The immediate electron acceptor for the enzyme in this species is believed to be plastoquinone. Couples the redox reaction to proton translocation, and thus conserves the redox energy in a proton gradient. This chain is NAD(P)H-quinone oxidoreductase subunit 4L, chloroplastic, found in Dioscorea elephantipes (Elephant's foot yam).